We begin with the raw amino-acid sequence, 183 residues long: Capsid protein (183 aa).

The tract at residues 143 to 183 is disordered; it reads LPETTVVRRRGRSPRRRTPSPRRRRSKSPRRRRSQSRESQC. Basic residues predominate over residues 149 to 176; sequence VRRRGRSPRRRTPSPRRRRSKSPRRRRS. Residues serine 155, serine 162, and serine 170 each carry the phosphoserine; by host modification. A 1; half-length repeat occupies 155 to 160; the sequence is SPRRRT. The tract at residues 155–176 is 3 X 7 AA repeats of S-P-R-R-R-[PR]-S; the sequence is SPRRRTPSPRRRRSKSPRRRRS. Positions 158–175 match the Bipartite nuclear localization signal motif; that stretch reads RRTPSPRRRRSKSPRRRR. A run of 2 repeats spans residues 162 to 168 and 170 to 176. An RNA binding region spans residues 177–183; the sequence is QSRESQC.

It belongs to the orthohepadnavirus core antigen family. Homodimerizes, then multimerizes. Interacts with cytosol exposed regions of viral L glycoprotein present in the reticulum-to-Golgi compartment. Interacts with human FLNB. Phosphorylated form interacts with host importin alpha; this interaction depends on the exposure of the NLS, which itself depends upon genome maturation and/or phosphorylation of the capsid protein. Interacts with host NUP153. Post-translationally, phosphorylated by host SRPK1, SRPK2, and maybe protein kinase C or GAPDH. Phosphorylation is critical for pregenomic RNA packaging. Protein kinase C phosphorylation is stimulated by HBx protein and may play a role in transport of the viral genome to the nucleus at the late step during the viral replication cycle.

The protein resides in the virion. It is found in the host cytoplasm. Functionally, self assembles to form an icosahedral capsid. Most capsids appear to be large particles with an icosahedral symmetry of T=4 and consist of 240 copies of capsid protein, though a fraction forms smaller T=3 particles consisting of 180 capsid proteins. Entering capsids are transported along microtubules to the nucleus. Phosphorylation of the capsid is thought to induce exposure of nuclear localization signal in the C-terminal portion of the capsid protein that allows binding to the nuclear pore complex via the importin (karyopherin-) alpha and beta. Capsids are imported in intact form through the nuclear pore into the nuclear basket, where it probably binds NUP153. Only capsids that contain the mature viral genome can release the viral DNA and capsid protein into the nucleoplasm. Immature capsids get stuck in the basket. Capsids encapsulate the pre-genomic RNA and the P protein. Pre-genomic RNA is reverse-transcribed into DNA while the capsid is still in the cytoplasm. The capsid can then either be directed to the nucleus, providing more genomes for transcription, or bud through the endoplasmic reticulum to provide new virions. The polypeptide is Capsid protein (Homo sapiens (Human)).